A 175-amino-acid chain; its full sequence is Acetyl-CoA decarbonylase/synthase complex subunit epsilon 2 (175 aa).

The protein belongs to the CdhB family. Heterotetramer of two alpha and two epsilon subunits. The ACDS complex is made up of alpha, epsilon, beta, gamma and delta subunits with a probable stoichiometry of (alpha(2)epsilon(2))(4)-beta(8)-(gamma(1)delta(1))(8).

Its function is as follows. Part of a complex that catalyzes the reversible cleavage of acetyl-CoA, allowing autotrophic growth from CO(2). The alpha-epsilon subcomponent functions as a carbon monoxide dehydrogenase. The precise role of the epsilon subunit is unclear; it may have a stabilizing role within the alpha(2)epsilon(2) component and/or be involved in electron transfer to FAD during a potential FAD-mediated CO oxidation. The polypeptide is Acetyl-CoA decarbonylase/synthase complex subunit epsilon 2 (cdhB2) (Archaeoglobus fulgidus (strain ATCC 49558 / DSM 4304 / JCM 9628 / NBRC 100126 / VC-16)).